Reading from the N-terminus, the 284-residue chain is tRNA-cytidine(32) 2-sulfurtransferase (284 aa).

The short motif at 44–49 (SGGKDS) is the PP-loop motif element. C119, C122, and C210 together coordinate [4Fe-4S] cluster.

The protein belongs to the TtcA family. As to quaternary structure, homodimer. Mg(2+) is required as a cofactor. [4Fe-4S] cluster serves as cofactor.

The protein resides in the cytoplasm. The enzyme catalyses cytidine(32) in tRNA + S-sulfanyl-L-cysteinyl-[cysteine desulfurase] + AH2 + ATP = 2-thiocytidine(32) in tRNA + L-cysteinyl-[cysteine desulfurase] + A + AMP + diphosphate + H(+). The protein operates within tRNA modification. In terms of biological role, catalyzes the ATP-dependent 2-thiolation of cytidine in position 32 of tRNA, to form 2-thiocytidine (s(2)C32). The sulfur atoms are provided by the cysteine/cysteine desulfurase (IscS) system. The protein is tRNA-cytidine(32) 2-sulfurtransferase of Chromohalobacter salexigens (strain ATCC BAA-138 / DSM 3043 / CIP 106854 / NCIMB 13768 / 1H11).